The sequence spans 341 residues: Methionine import ATP-binding protein MetN 3 (341 aa).

Residues 2 to 241 (ILLENVKKIY…PKQDITKRFV (240 aa)) enclose the ABC transporter domain. 38-45 (GYSGAGKS) serves as a coordination point for ATP.

This sequence belongs to the ABC transporter superfamily. Methionine importer (TC 3.A.1.24) family. As to quaternary structure, the complex is composed of two ATP-binding proteins (MetN), two transmembrane proteins (MetI) and a solute-binding protein (MetQ).

The protein resides in the cell membrane. The enzyme catalyses L-methionine(out) + ATP + H2O = L-methionine(in) + ADP + phosphate + H(+). It catalyses the reaction D-methionine(out) + ATP + H2O = D-methionine(in) + ADP + phosphate + H(+). Functionally, part of the ABC transporter complex MetNIQ involved in methionine import. Responsible for energy coupling to the transport system. This is Methionine import ATP-binding protein MetN 3 from Bacillus cereus (strain ATCC 14579 / DSM 31 / CCUG 7414 / JCM 2152 / NBRC 15305 / NCIMB 9373 / NCTC 2599 / NRRL B-3711).